A 78-amino-acid chain; its full sequence is Large ribosomal subunit protein bL28 (78 aa).

The protein belongs to the bacterial ribosomal protein bL28 family.

This Francisella tularensis subsp. holarctica (strain FTNF002-00 / FTA) protein is Large ribosomal subunit protein bL28.